The following is a 101-amino-acid chain: Small ribosomal subunit protein uS14 (101 aa).

This sequence belongs to the universal ribosomal protein uS14 family. In terms of assembly, part of the 30S ribosomal subunit. Contacts proteins S3 and S10.

In terms of biological role, binds 16S rRNA, required for the assembly of 30S particles and may also be responsible for determining the conformation of the 16S rRNA at the A site. The sequence is that of Small ribosomal subunit protein uS14 from Xylella fastidiosa (strain M23).